The sequence spans 367 residues: Cyclin-D5-1 (367 aa).

Positions 307–333 (QPTSPASKSTTTTTGKRSSSSSCSEST) are disordered.

This sequence belongs to the cyclin family. Cyclin D subfamily.

This Oryza sativa subsp. japonica (Rice) protein is Cyclin-D5-1 (CYCD5-1).